The sequence spans 233 residues: Probable O-methyltransferase Rv1703c (233 aa).

S-adenosyl-L-methionine-binding positions include valine 55, glutamate 77, 79–80 (GT), and glutamate 102. Aspartate 157 serves as a coordination point for a divalent metal cation. Position 159 (aspartate 159) interacts with S-adenosyl-L-methionine. Aspartate 185 and asparagine 186 together coordinate a divalent metal cation.

The protein belongs to the class I-like SAM-binding methyltransferase superfamily. Cation-dependent O-methyltransferase family.

Specifically methylates an O atom of its substrate. The sequence is that of Probable O-methyltransferase Rv1703c from Mycobacterium tuberculosis (strain ATCC 25618 / H37Rv).